A 260-amino-acid chain; its full sequence is Archaerhodopsin-1 (260 aa).

The propeptide occupies 1–6 (MDPIAL). The Extracellular portion of the chain corresponds to 7-20 (TAAVGADLLGDGRP). The chain crosses the membrane as a helical span at residues 21–42 (ETLWLGIGTLLMLIGTFYFIVK). At 43–51 (GWGVTDKEA) the chain is on the cytoplasmic side. A helical transmembrane segment spans residues 52–73 (REYYSITILVPGIASAAYLSMF). The Extracellular portion of the chain corresponds to 74–91 (FGIGLTEVQVGSEMLDIY). Residues 92-113 (YARYADWLFTTPLLLLDLALLA) form a helical membrane-spanning segment. Residues 114–116 (KVD) are Cytoplasmic-facing. Residues 117–139 (RVSIGTLVGVDALMIVTGLVGAL) form a helical membrane-spanning segment. The Extracellular portion of the chain corresponds to 140–143 (SHTP). A helical membrane pass occupies residues 144 to 172 (LARYTWWLFSTICMIVVLYFLATSLRAAA). At 173-176 (KERG) the chain is on the cytoplasmic side. The chain crosses the membrane as a helical span at residues 177–204 (PEVASTFNTLTALVLVLWTAYPILWIIG). Residues 205-212 (TEGAGVVG) are Extracellular-facing. The helical transmembrane segment at 213-245 (LGIETLLFMVLDVTAKVGFGFILLRSRAILGDT) threads the bilayer. K228 carries the post-translational modification N6-(retinylidene)lysine. Over 246-260 (EAPEPSAGAEASAAD) the chain is Cytoplasmic.

This sequence belongs to the archaeal/bacterial/fungal opsin family.

It is found in the cell membrane. In terms of biological role, light-driven proton pump. It may interact with bacterioruberin in the claret membrane. This chain is Archaerhodopsin-1, found in Halorubrum ezzemoulense (Halorubrum chaoviator).